We begin with the raw amino-acid sequence, 379 residues long: Synaptic vesicle membrane protein VAT-1 (379 aa).

Phosphoserine is present on Ser273.

This sequence belongs to the zinc-containing alcohol dehydrogenase family. Quinone oxidoreductase subfamily. As to expression, cholinergic synaptic vesicles.

Its subcellular location is the cytoplasmic vesicle. The protein localises to the secretory vesicle. It localises to the synaptic vesicle membrane. May play a central role in the functions mediated by specific classes of synaptic vesicles. This is Synaptic vesicle membrane protein VAT-1 from Tetronarce californica (Pacific electric ray).